We begin with the raw amino-acid sequence, 164 residues long: CDP-archaeol synthase (164 aa).

4 consecutive transmembrane segments (helical) span residues 3-23, 51-71, 77-97, and 122-142; these read LLYF…AVLA, YEGF…PNLL, LLDA…GAFI, and LAVY…AVII.

The protein belongs to the CDP-archaeol synthase family. It depends on Mg(2+) as a cofactor.

The protein resides in the cell membrane. It catalyses the reaction 2,3-bis-O-(geranylgeranyl)-sn-glycerol 1-phosphate + CTP + H(+) = CDP-2,3-bis-O-(geranylgeranyl)-sn-glycerol + diphosphate. Its pathway is membrane lipid metabolism; glycerophospholipid metabolism. Catalyzes the formation of CDP-2,3-bis-(O-geranylgeranyl)-sn-glycerol (CDP-archaeol) from 2,3-bis-(O-geranylgeranyl)-sn-glycerol 1-phosphate (DGGGP) and CTP. This reaction is the third ether-bond-formation step in the biosynthesis of archaeal membrane lipids. In Pyrobaculum islandicum (strain DSM 4184 / JCM 9189 / GEO3), this protein is CDP-archaeol synthase.